Here is a 190-residue protein sequence, read N- to C-terminus: Large ribosomal subunit protein bL25 (190 aa).

The protein belongs to the bacterial ribosomal protein bL25 family. CTC subfamily. As to quaternary structure, part of the 50S ribosomal subunit; part of the 5S rRNA/L5/L18/L25 subcomplex. Contacts the 5S rRNA. Binds to the 5S rRNA independently of L5 and L18.

Functionally, this is one of the proteins that binds to the 5S RNA in the ribosome where it forms part of the central protuberance. This chain is Large ribosomal subunit protein bL25, found in Neisseria meningitidis serogroup A / serotype 4A (strain DSM 15465 / Z2491).